We begin with the raw amino-acid sequence, 798 residues long: Acetyl-CoA decarbonylase/synthase complex subunit alpha 2 (798 aa).

[4Fe-4S] cluster is bound by residues Cys-65, Cys-68, Cys-69, Cys-71, Cys-76, and Cys-86. A CO-binding site is contributed by His-109. Residues His-246, Cys-274, and Cys-313 each coordinate [Ni-4Fe-4S] cluster. 2 consecutive 4Fe-4S ferredoxin-type domains span residues 395-424 and 434-463; these read EEQF…IGEA and SKLE…IDMY. Residues Cys-405, Cys-408, Cys-411, Cys-415, Cys-443, Cys-446, Cys-449, and Cys-453 each coordinate [4Fe-4S] cluster. [Ni-4Fe-4S] cluster-binding residues include Cys-511, Cys-540, and Cys-575.

Belongs to the Ni-containing carbon monoxide dehydrogenase family. Heterotetramer of two alpha and two epsilon subunits. The ACDS complex is made up of alpha, epsilon, beta, gamma and delta subunits with a probable stoichiometry of (alpha(2)epsilon(2))(4)-beta(8)-(gamma(1)delta(1))(8). Requires [4Fe-4S] cluster as cofactor. The cofactor is [Ni-4Fe-4S] cluster.

It catalyses the reaction CO + 2 oxidized [2Fe-2S]-[ferredoxin] + H2O = 2 reduced [2Fe-2S]-[ferredoxin] + CO2 + 2 H(+). Functionally, part of the ACDS complex that catalyzes the reversible cleavage of acetyl-CoA, allowing autotrophic growth from CO(2). The alpha-epsilon subcomponent functions as a carbon monoxide dehydrogenase. The sequence is that of Acetyl-CoA decarbonylase/synthase complex subunit alpha 2 from Archaeoglobus fulgidus (strain ATCC 49558 / DSM 4304 / JCM 9628 / NBRC 100126 / VC-16).